Reading from the N-terminus, the 81-residue chain is ITACLVLIGTVCAKEGYLVNKSTGCKYNCLILGENKNCDMECKAKNQGGSYGYCYKLACWCEGLPESTPTYPIPGKTCRTK.

An N-terminal signal peptide occupies residues 1–13; that stretch reads ITACLVLIGTVCA. An LCN-type CS-alpha/beta domain is found at 14-79; the sequence is KEGYLVNKST…TYPIPGKTCR (66 aa). Disulfide bonds link C25–C78, C29–C54, C38–C59, and C42–C61. K81 is a propeptide (removed by a carboxypeptidase).

This sequence belongs to the long (4 C-C) scorpion toxin superfamily. Sodium channel inhibitor family. Beta subfamily. Expressed by the venom gland.

It is found in the secreted. Functionally, beta toxins bind voltage-independently at site-4 of sodium channels (Nav) and shift the voltage of activation toward more negative potentials thereby affecting sodium channel activation and promoting spontaneous and repetitive firing. Is toxic on insects and crustaceans, but not on mammals. This chain is Insect-toxin Cn10, found in Centruroides noxius (Mexican scorpion).